A 274-amino-acid polypeptide reads, in one-letter code: 4-diphosphocytidyl-2-C-methyl-D-erythritol kinase (274 aa).

Lysine 14 is an active-site residue. An ATP-binding site is contributed by 94–104 (PMQAGLGGGSS). Aspartate 134 is a catalytic residue.

This sequence belongs to the GHMP kinase family. IspE subfamily.

It carries out the reaction 4-CDP-2-C-methyl-D-erythritol + ATP = 4-CDP-2-C-methyl-D-erythritol 2-phosphate + ADP + H(+). It participates in isoprenoid biosynthesis; isopentenyl diphosphate biosynthesis via DXP pathway; isopentenyl diphosphate from 1-deoxy-D-xylulose 5-phosphate: step 3/6. Functionally, catalyzes the phosphorylation of the position 2 hydroxy group of 4-diphosphocytidyl-2C-methyl-D-erythritol. The sequence is that of 4-diphosphocytidyl-2-C-methyl-D-erythritol kinase from Thermosipho melanesiensis (strain DSM 12029 / CIP 104789 / BI429).